A 736-amino-acid chain; its full sequence is Catalase-peroxidase (736 aa).

The interval 1–30 (MGGNVMTDDKMNSVTSGANKQETGRDMSNR) is disordered. The span at 12 to 21 (NSVTSGANKQ) shows a compositional bias: polar residues. The segment at residues 101–224 (WHSAGTYRAG…LAAVQMGLIY (124 aa)) is a cross-link (tryptophyl-tyrosyl-methioninium (Trp-Tyr) (with M-250)). His-102 functions as the Proton acceptor in the catalytic mechanism. A cross-link (tryptophyl-tyrosyl-methioninium (Tyr-Met) (with W-101)) is located at residues 224 to 250 (YVNPEGPNGNPDPIAAAKDIREVFARM). His-265 contributes to the heme b binding site. A disordered region spans residues 351–373 (KGGAGAGTIPDAHDPSKRHAPSM).

This sequence belongs to the peroxidase family. Peroxidase/catalase subfamily. As to quaternary structure, homodimer or homotetramer. Heme b is required as a cofactor. Post-translationally, formation of the three residue Trp-Tyr-Met cross-link is important for the catalase, but not the peroxidase activity of the enzyme.

It carries out the reaction H2O2 + AH2 = A + 2 H2O. The enzyme catalyses 2 H2O2 = O2 + 2 H2O. In terms of biological role, bifunctional enzyme with both catalase and broad-spectrum peroxidase activity. This is Catalase-peroxidase from Methanosarcina acetivorans (strain ATCC 35395 / DSM 2834 / JCM 12185 / C2A).